Here is a 288-residue protein sequence, read N- to C-terminus: Polyamine aminopropyltransferase (288 aa).

The PABS domain occupies 9–238 (ETLHDQFGQY…GIMTFAWATD (230 aa)). Glutamine 33 serves as a coordination point for S-methyl-5'-thioadenosine. Spermidine is bound by residues histidine 64 and aspartate 88. S-methyl-5'-thioadenosine is bound by residues glutamate 108 and 140–141 (DG). Aspartate 158 functions as the Proton acceptor in the catalytic mechanism. Position 158-161 (158-161 (DCTD)) interacts with spermidine. Residue proline 165 participates in S-methyl-5'-thioadenosine binding.

It belongs to the spermidine/spermine synthase family. Homodimer or homotetramer.

Its subcellular location is the cytoplasm. It catalyses the reaction S-adenosyl 3-(methylsulfanyl)propylamine + putrescine = S-methyl-5'-thioadenosine + spermidine + H(+). Its pathway is amine and polyamine biosynthesis; spermidine biosynthesis; spermidine from putrescine: step 1/1. Its function is as follows. Catalyzes the irreversible transfer of a propylamine group from the amino donor S-adenosylmethioninamine (decarboxy-AdoMet) to putrescine (1,4-diaminobutane) to yield spermidine. The polypeptide is Polyamine aminopropyltransferase (Shigella boydii serotype 4 (strain Sb227)).